Consider the following 352-residue polypeptide: Ion-translocating oxidoreductase complex subunit D (352 aa).

The next 4 membrane-spanning stretches (helical) occupy residues 20–40 (IMLL…WFFG), 42–62 (GTLF…AIVL), 69–91 (VASH…SIPP), and 123–143 (PAMI…TSWL). Threonine 187 carries the post-translational modification FMN phosphoryl threonine. 5 consecutive transmembrane segments (helical) span residues 215–235 (LAGV…VFLL), 242–262 (WHIP…GWLF), 267–287 (LASP…FFIL), 301–321 (LIFG…GGYP), and 322–342 (DGVA…DYYT).

This sequence belongs to the NqrB/RnfD family. The complex is composed of six subunits: RsxA, RsxB, RsxC, RsxD, RsxE and RsxG. The cofactor is FMN.

Its subcellular location is the cell inner membrane. In terms of biological role, part of a membrane-bound complex that couples electron transfer with translocation of ions across the membrane. Required to maintain the reduced state of SoxR. This chain is Ion-translocating oxidoreductase complex subunit D, found in Salmonella dublin (strain CT_02021853).